The primary structure comprises 200 residues: Probable nicotinate-nucleotide adenylyltransferase (200 aa).

The protein belongs to the NadD family.

The enzyme catalyses nicotinate beta-D-ribonucleotide + ATP + H(+) = deamido-NAD(+) + diphosphate. Its pathway is cofactor biosynthesis; NAD(+) biosynthesis; deamido-NAD(+) from nicotinate D-ribonucleotide: step 1/1. Functionally, catalyzes the reversible adenylation of nicotinate mononucleotide (NaMN) to nicotinic acid adenine dinucleotide (NaAD). In Clostridium botulinum (strain Eklund 17B / Type B), this protein is Probable nicotinate-nucleotide adenylyltransferase.